We begin with the raw amino-acid sequence, 594 residues long: Jacalin-related lectin 44 (594 aa).

Residues 1-23 are disordered; that stretch reads MIQKLGAKGIKSDERNQREWDDG. Jacalin-type lectin domains follow at residues 2–148, 151–293, 296–441, and 448–588; these read IQKL…YFIS, PTRL…YFST, PNKL…YYRP, and VKRL…HVIP. Residues 10 to 23 are compositionally biased toward basic and acidic residues; that stretch reads IKSDERNQREWDDG.

It belongs to the jacalin lectin family.

In Arabidopsis thaliana (Mouse-ear cress), this protein is Jacalin-related lectin 44 (JAL44).